A 185-amino-acid chain; its full sequence is Ribosome maturation factor RimM (185 aa).

Positions 106–185 constitute a PRC barrel domain; sequence EGDYYWKDLM…SIEVDWDPGF (80 aa).

The protein belongs to the RimM family. Binds ribosomal protein uS19.

Its subcellular location is the cytoplasm. In terms of biological role, an accessory protein needed during the final step in the assembly of 30S ribosomal subunit, possibly for assembly of the head region. Essential for efficient processing of 16S rRNA. May be needed both before and after RbfA during the maturation of 16S rRNA. It has affinity for free ribosomal 30S subunits but not for 70S ribosomes. The polypeptide is Ribosome maturation factor RimM (Shigella dysenteriae serotype 1 (strain Sd197)).